Reading from the N-terminus, the 193-residue chain is Thymidine kinase (193 aa).

Residue 9 to 16 participates in ATP binding; that stretch reads AAMNAGKS.

It belongs to the thymidine kinase family.

It catalyses the reaction thymidine + ATP = dTMP + ADP + H(+). This thymidine kinase is one of the enzymes that catalyze DNA precursor synthesis. Although tk is a nonessential gene, some strains of host E.coli do not support the growth of phages that lack this gene. The polypeptide is Thymidine kinase (TK) (Escherichia coli (Bacteriophage T4)).